Reading from the N-terminus, the 602-residue chain is Glutamine--fructose-6-phosphate aminotransferase [isomerizing] (602 aa).

The active-site Nucleophile; for GATase activity is Cys2. Residues 2–219 (CGIIGYIGDR…DGEYAILTKD (218 aa)) form the Glutamine amidotransferase type-2 domain. SIS domains follow at residues 280–420 (VAEE…VLGT) and 453–592 (LAET…PDKP). Lys597 serves as the catalytic For Fru-6P isomerization activity.

As to quaternary structure, homodimer.

The protein resides in the cytoplasm. The enzyme catalyses D-fructose 6-phosphate + L-glutamine = D-glucosamine 6-phosphate + L-glutamate. Catalyzes the first step in hexosamine metabolism, converting fructose-6P into glucosamine-6P using glutamine as a nitrogen source. In Thermococcus kodakarensis (strain ATCC BAA-918 / JCM 12380 / KOD1) (Pyrococcus kodakaraensis (strain KOD1)), this protein is Glutamine--fructose-6-phosphate aminotransferase [isomerizing].